Reading from the N-terminus, the 549-residue chain is mRNA-capping enzyme subunit beta (549 aa).

Ser2 bears the N-acetylserine mark. Ser15 bears the Phosphoserine mark. Residues 30–169 (LQKLSEAANG…QGNEGNIASN (140 aa)) form a disordered region. The span at 86 to 96 (DDEETDTDDEM) shows a compositional bias: acidic residues. Ser124 bears the Phosphoserine mark. The segment covering 135–157 (AKLEKPSDDSIHQNSKSDEEQRI) has biased composition (basic and acidic residues). Lys223 functions as the N6-GMP-lysine intermediate in the catalytic mechanism.

Belongs to the fungal TPase family. Heterodimer. The mRNA-capping enzyme is composed of two separate chains alpha and beta, respectively a mRNA guanylyltransferase and an mRNA 5'-triphosphate monophosphatase. Requires Mg(2+) as cofactor.

The protein resides in the nucleus. The enzyme catalyses a 5'-end triphospho-ribonucleoside in mRNA + H2O = a 5'-end diphospho-ribonucleoside in mRNA + phosphate + H(+). Functionally, first step of mRNA capping. Converts the 5'-triphosphate end of a nascent mRNA chain into a diphosphate end. The sequence is that of mRNA-capping enzyme subunit beta (CET1) from Saccharomyces cerevisiae (strain ATCC 204508 / S288c) (Baker's yeast).